The sequence spans 236 residues: MKGIFGTKVGMTQVFEENGRLIPVTLVRVEPNQVVSVKTKEKDGYDAVQLGFNQTDEKNLNKPQLGHFKKANTNNYKYLEEVRGMVGYKIGDLLKVEELFQEGQVVDVQARTKGRGFTGAIKRWNFKIGSKGHGAGYPHRFQGSVQAGRGGSQAQRVMKGKKMSGHYGNELVTIQNLSIVGFLPEVSSVMISGAIPGANNSKVRITTSKKNPNTVLTYKLIINKKASKPAGEQAQE.

Belongs to the universal ribosomal protein uL3 family. Part of the 50S ribosomal subunit. Forms a cluster with proteins L14 and L19.

Functionally, one of the primary rRNA binding proteins, it binds directly near the 3'-end of the 23S rRNA, where it nucleates assembly of the 50S subunit. This Mycoplasmoides gallisepticum (strain R(low / passage 15 / clone 2)) (Mycoplasma gallisepticum) protein is Large ribosomal subunit protein uL3.